A 589-amino-acid chain; its full sequence is 2-succinyl-5-enolpyruvyl-6-hydroxy-3-cyclohexene-1-carboxylate synthase (589 aa).

This sequence belongs to the TPP enzyme family. MenD subfamily. Homodimer. It depends on Mg(2+) as a cofactor. Mn(2+) is required as a cofactor. Requires thiamine diphosphate as cofactor.

It carries out the reaction isochorismate + 2-oxoglutarate + H(+) = 5-enolpyruvoyl-6-hydroxy-2-succinyl-cyclohex-3-ene-1-carboxylate + CO2. The protein operates within quinol/quinone metabolism; 1,4-dihydroxy-2-naphthoate biosynthesis; 1,4-dihydroxy-2-naphthoate from chorismate: step 2/7. It functions in the pathway quinol/quinone metabolism; menaquinone biosynthesis. In terms of biological role, catalyzes the thiamine diphosphate-dependent decarboxylation of 2-oxoglutarate and the subsequent addition of the resulting succinic semialdehyde-thiamine pyrophosphate anion to isochorismate to yield 2-succinyl-5-enolpyruvyl-6-hydroxy-3-cyclohexene-1-carboxylate (SEPHCHC). The protein is 2-succinyl-5-enolpyruvyl-6-hydroxy-3-cyclohexene-1-carboxylate synthase of Myxococcus xanthus (strain DK1622).